The primary structure comprises 369 residues: Deoxyuridine 5'-triphosphate nucleotidohydrolase (369 aa).

Substrate is bound by residues 258–260 (RSS) and 364–365 (FG).

This sequence belongs to the dUTPase family. Mg(2+) serves as cofactor.

The catalysed reaction is dUTP + H2O = dUMP + diphosphate + H(+). Its function is as follows. Involved in nucleotide metabolism: produces dUMP, the immediate precursor of thymidine nucleotides and decreases the intracellular concentration of dUTP to avoid uracil incorporation into viral DNA. The chain is Deoxyuridine 5'-triphosphate nucleotidohydrolase from Homo sapiens (Human).